Consider the following 93-residue polypeptide: Small ribosomal subunit protein uS19 (93 aa).

The protein belongs to the universal ribosomal protein uS19 family.

Protein S19 forms a complex with S13 that binds strongly to the 16S ribosomal RNA. In Acidothermus cellulolyticus (strain ATCC 43068 / DSM 8971 / 11B), this protein is Small ribosomal subunit protein uS19.